The primary structure comprises 215 residues: E3 ubiquitin-protein ligase NleG (215 aa).

Positions 136–189 (CPITLCIPETGVFVRNAKNSEICSLYDHNALTELIRRNAPHPLSREPFVPEMIV) are RING/U-box domain. The PDZ-binding motif signature appears at 213 to 215 (TRI).

The protein belongs to the NleG E3 ligase family. As to quaternary structure, interacts with host GOPC (human protein). Two sizes of protein are detected upon expression in C.rodentium; only the smaller protein is secreted.

It is found in the secreted. The protein resides in the host cytoplasm. It carries out the reaction S-ubiquitinyl-[E2 ubiquitin-conjugating enzyme]-L-cysteine + [acceptor protein]-L-lysine = [E2 ubiquitin-conjugating enzyme]-L-cysteine + N(6)-ubiquitinyl-[acceptor protein]-L-lysine.. Effector proteins function to alter host cell physiology and promote bacterial survival in host tissues. This protein is an E3 ubiquitin-protein ligase that probably interferes with the host's ubiquitination pathway and targets host proteins for proteasomal degradation. Can ubiquitinate ubiquitin, giving rise to polyubiquitin chains (in vitro). Does not complement an nleG8 deletion in C.rodentium. The chain is E3 ubiquitin-protein ligase NleG from Escherichia coli O157:H7.